Consider the following 212-residue polypeptide: Protein FAM177A1 (212 aa).

At M1 the chain carries N-acetylmethionine. A compositionally biased stretch (basic and acidic residues) spans 1–11 (MEGEPASREEG). Residues 1-33 (MEGEPASREEGEAVNASGAAAASAFRESAQQMS) form a disordered region. Positions 13–29 (AVNASGAAAASAFRESA) are enriched in low complexity. Position 69 is a phosphoserine (S69). T70 is subject to Phosphothreonine. Positions 135 to 172 (IDEYYRMKKEEEEEEEENRMSEEAERQYQQNKLQADSV) form a coiled coil. Residues 146–179 (EEEEEENRMSEEAERQYQQNKLQADSVVQSDQPE) are disordered. Positions 161 to 179 (QYQQNKLQADSVVQSDQPE) are enriched in polar residues.

Belongs to the FAM177 family.

This is Protein FAM177A1 (FAM177A1) from Bos taurus (Bovine).